Consider the following 164-residue polypeptide: Ubiquitin-conjugating enzyme E2 2 (164 aa).

Residues 4–150 enclose the UBC core domain; the sequence is PARRRLMRDF…VKETVEKSWE (147 aa). The Glycyl thioester intermediate role is filled by Cys88.

This sequence belongs to the ubiquitin-conjugating enzyme family.

It localises to the cytoplasm. It is found in the nucleus. The catalysed reaction is S-ubiquitinyl-[E1 ubiquitin-activating enzyme]-L-cysteine + [E2 ubiquitin-conjugating enzyme]-L-cysteine = [E1 ubiquitin-activating enzyme]-L-cysteine + S-ubiquitinyl-[E2 ubiquitin-conjugating enzyme]-L-cysteine.. It functions in the pathway protein modification; protein ubiquitination. Functionally, catalyzes the covalent attachment of ubiquitin to other proteins. Plays a role in transcription regulation by catalyzing the monoubiquitination of histone H2B to form H2BK123ub1. H2BK123ub1 gives a specific tag for epigenetic transcriptional activation and is also a prerequisite for H3K4me and H3K79me formation. Also involved in postreplication repair of UV-damaged DNA, in N-end rule-dependent protein degradation and in sporulation. In Kluyveromyces lactis (strain ATCC 8585 / CBS 2359 / DSM 70799 / NBRC 1267 / NRRL Y-1140 / WM37) (Yeast), this protein is Ubiquitin-conjugating enzyme E2 2 (UBC2).